We begin with the raw amino-acid sequence, 241 residues long: ATP synthase subunit a (241 aa).

The next 5 membrane-spanning stretches (helical) occupy residues 30 to 50, 91 to 111, 128 to 148, 193 to 213, and 214 to 234; these read GQVF…VVVG, FIGT…LVPW, INTT…AGLS, LVVA…VMFL, and GLFT…YYIG.

Belongs to the ATPase A chain family. As to quaternary structure, F-type ATPases have 2 components, CF(1) - the catalytic core - and CF(0) - the membrane proton channel. CF(1) has five subunits: alpha(3), beta(3), gamma(1), delta(1), epsilon(1). CF(0) has four main subunits: a, b, b' and c.

It is found in the cellular thylakoid membrane. In terms of biological role, key component of the proton channel; it plays a direct role in the translocation of protons across the membrane. This Prochlorococcus marinus (strain MIT 9303) protein is ATP synthase subunit a.